Consider the following 466-residue polypeptide: 3-isopropylmalate dehydratase large subunit (466 aa).

[4Fe-4S] cluster is bound by residues cysteine 347, cysteine 407, and cysteine 410.

The protein belongs to the aconitase/IPM isomerase family. LeuC type 1 subfamily. In terms of assembly, heterodimer of LeuC and LeuD. [4Fe-4S] cluster serves as cofactor.

The catalysed reaction is (2R,3S)-3-isopropylmalate = (2S)-2-isopropylmalate. It functions in the pathway amino-acid biosynthesis; L-leucine biosynthesis; L-leucine from 3-methyl-2-oxobutanoate: step 2/4. Its function is as follows. Catalyzes the isomerization between 2-isopropylmalate and 3-isopropylmalate, via the formation of 2-isopropylmaleate. The polypeptide is 3-isopropylmalate dehydratase large subunit (Buchnera aphidicola subsp. Thelaxes suberi).